Here is a 687-residue protein sequence, read N- to C-terminus: DnaJ protein ERDJ2A (687 aa).

Residues 1–8 (MAASEENS) lie on the Lumenal side of the membrane. A helical membrane pass occupies residues 9 to 29 (ALFPIFILTIMAIPLVPYTMV). Over 30 to 65 (KLSGALSKKQRTIHCQCLECDRSGKYKRSLFKKISN) the chain is Cytoplasmic. A helical transmembrane segment spans residues 66 to 86 (FSTWSNLTLVLLWVVMIFLIY). The Lumenal portion of the chain corresponds to 87-190 (YTKNMSREAQ…FLLDIDGASG (104 aa)). A glycan (N-linked (GlcNAc...) asparagine) is linked at N90. One can recognise a J domain in the interval 99 to 164 (DPFSILGLEP…VSRENFEKYG (66 aa)). Residues 191-211 (GILLLWIVGVCILLPLVIAVI) form a helical membrane-spanning segment. The SEC63 domain occupies 205-603 (PLVIAVIYLS…IGCDKKQALK (399 aa)). Over 212-687 (YLSRSSKYTG…SSEESGSEEE (476 aa)) the chain is Cytoplasmic. Residues 619–687 (SDEGAIAEEG…SSEESGSEEE (69 aa)) are disordered. The segment covering 623–654 (AIAEEGMEEEDEIEEEDYDDDYESEYSEDEDE) has biased composition (acidic residues).

Interacts with OEP61/TPR7. As to expression, expressed in leaves, flower buds and flowers.

It is found in the endoplasmic reticulum membrane. Required for integral membrane and secreted preprotein translocation across the endoplasmic reticulum membrane. This Arabidopsis thaliana (Mouse-ear cress) protein is DnaJ protein ERDJ2A (ERDJ2A).